The primary structure comprises 277 residues: MVVVTHISTSFHQISPSFFHLRLRNPSTTSSSRPKLDGGFALSIRAYIEKPNSFSTFANKVIGSLPVIGLLARIISDEGGVGRDLVDFAEFRKRVGNKCTPDDSRAFYEFQQRRGKAGEPLYVLLCCWVAAVGAGLLKSEEILEGVTRVSISNDLEFEEQNFIALMTEARQRRAKLNIDAPTIPMELRVEKALEGIYACCFRRGLIEEEDEKLLKVMLIAVFPSVEKSEIERIIKEKATRVEEGGEEENVMAKRLPKEAIQMQMKDLEFLQQQNIES.

A chloroplast-targeting transit peptide spans 1 to 45; sequence MVVVTHISTSFHQISPSFFHLRLRNPSTTSSSRPKLDGGFALSIR.

In terms of assembly, interacts with PYG7.

The protein resides in the plastid. The protein localises to the chloroplast. It is found in the chloroplast thylakoid membrane. Functionally, nuclear genome-encoded factor required for the accumulation of photosystem I (PSI). Functions as a PSI biogenesis factor. Cooperates with PYG7 to promote the stable assembly of PSI in the thylakoid membrane. May target primarily the PsaC subunit. Does not seem to be required for the expression of chloroplast genes encoding PSI subunits. The chain is Photosystem I assembly factor PSA3, chloroplastic from Arabidopsis thaliana (Mouse-ear cress).